The primary structure comprises 385 residues: Hemagglutinin-esterase (385 aa).

A signal peptide spans 1 to 11 (MLIIFLFFNFC). Residues 1–121 (MLIIFLFFNF…SNDVWIFNKV (121 aa)) form an esterase domain 1 region. Residues 12 to 361 (YGFNEPLNVV…LNCFYDPLPI (350 aa)) lie on the Virion surface side of the membrane. Residue Ser-34 is the Nucleophile of the active site. Cys-38 and Cys-59 are disulfide-bonded. 6 N-linked (GlcNAc...) asparagine; by host glycosylation sites follow: Asn-83, Asn-110, Asn-145, Asn-171, Asn-196, and Asn-251. A disulfide bridge links Cys-107 with Cys-155. The segment at 122 to 239 (RFYRALYSNM…GSYKIFSTGF (118 aa)) is receptor binding. 2 cysteine pairs are disulfide-bonded: Cys-183–Cys-249 and Cys-191–Cys-222. Positions 240-352 (VLSIPTKALC…NCPTSAYIKL (113 aa)) are esterase domain 2. A disulfide bond links Cys-280 and Cys-285. N-linked (GlcNAc...) asparagine; by host glycosylation is present at Asn-289. Residues Asp-299 and His-302 each act as charge relay system in the active site. A disulfide bond links Cys-320 and Cys-344. N-linked (GlcNAc...) asparagine; by host glycosylation is present at Asn-331. A helical membrane pass occupies residues 362 to 382 (ILQGILLFLALLFIVFLLFLV). Residues 383–385 (YHG) lie on the Intravirion side of the membrane.

This sequence belongs to the influenza type C/coronaviruses hemagglutinin-esterase family. In terms of assembly, homodimer; disulfide-linked. Forms a complex with the M protein in the pre-Golgi. Associates then with S-M complex to form a ternary complex S-M-HE. In terms of processing, N-glycosylated in the host RER.

The protein localises to the virion membrane. It localises to the host cell membrane. The enzyme catalyses N-acetyl-9-O-acetylneuraminate + H2O = N-acetylneuraminate + acetate + H(+). It catalyses the reaction N-acetyl-4-O-acetylneuraminate + H2O = N-acetylneuraminate + acetate + H(+). Its function is as follows. Structural protein that makes short spikes at the surface of the virus. Contains receptor binding and receptor-destroying activities. Mediates de-O-acetylation of N-acetyl-4-O-acetylneuraminic acid, which is probably the receptor determinant recognized by the virus on the surface of erythrocytes and susceptible cells. This receptor-destroying activity is important for virus release as it probably helps preventing self-aggregation and ensures the efficient spread of the progeny virus from cell to cell. May serve as a secondary viral attachment protein for initiating infection, the spike protein being the major one. May become a target for both the humoral and the cellular branches of the immune system. This chain is Hemagglutinin-esterase, found in Human coronavirus HKU1 (isolate N2) (HCoV-HKU1).